The sequence spans 479 residues: Monodictyphenone cluster transcriptional coactivator mdpA (479 aa).

One can recognise an HTH iclR-type domain in the interval 77–147 (LAVQNQLLAC…DPGQVAHSAL (71 aa)). Positions 107-126 (IKDVAELAGVPETHLSRIIR) form a DNA-binding region, H-T-H motif. Disordered regions lie at residues 281–305 (GPTA…HKHD) and 314–333 (TAST…TTNS). Pro residues predominate over residues 289-298 (HPNPIRPPTP). The segment covering 314–323 (TASTTPASSH) has biased composition (low complexity).

The protein localises to the nucleus. In terms of biological role, transcriptional coactivator; part of the gene cluster that mediates the biosynthesis of monodictyphenone, a prenyl xanthone derivative. With mdpE, coregulates the production of monodictyphenone. The chain is Monodictyphenone cluster transcriptional coactivator mdpA from Emericella nidulans (strain FGSC A4 / ATCC 38163 / CBS 112.46 / NRRL 194 / M139) (Aspergillus nidulans).